The sequence spans 92 residues: MRLFVFFMLCLLVLLQYHLWFGKNGLGDRHNLQEEVTLILENNSELRQRNQMMFSEIKDLKEGTDAIEERARNELGLVKEGETFFRIVPKED.

At 1–3 (MRL) the chain is on the cytoplasmic side. A helical transmembrane segment spans residues 4-21 (FVFFMLCLLVLLQYHLWF). Residues 22–92 (GKNGLGDRHN…TFFRIVPKED (71 aa)) are Periplasmic-facing. Residues 28 to 62 (DRHNLQEEVTLILENNSELRQRNQMMFSEIKDLKE) are a coiled coil.

The protein belongs to the FtsB family. In terms of assembly, part of a complex composed of FtsB, FtsL and FtsQ.

Its subcellular location is the cell inner membrane. In terms of biological role, essential cell division protein. May link together the upstream cell division proteins, which are predominantly cytoplasmic, with the downstream cell division proteins, which are predominantly periplasmic. This Psychromonas ingrahamii (strain DSM 17664 / CCUG 51855 / 37) protein is Cell division protein FtsB.